Consider the following 236-residue polypeptide: Eukaryotic translation initiation factor 3 subunit K (236 aa).

A PCI domain is found at 48-218; it reads CDCNANRTLL…EAKKAEIRED (171 aa).

Belongs to the eIF-3 subunit K family.

It is found in the cytoplasm. Functionally, component of the eukaryotic translation initiation factor 3 (eIF-3) complex, which is involved in protein synthesis of a specialized repertoire of mRNAs and, together with other initiation factors, stimulates binding of mRNA and methionyl-tRNAi to the 40S ribosome. The eIF-3 complex specifically targets and initiates translation of a subset of mRNAs involved in cell proliferation. This Pyricularia oryzae (strain Y34) (Rice blast fungus) protein is Eukaryotic translation initiation factor 3 subunit K.